Reading from the N-terminus, the 214-residue chain is UPF0690 protein C1orf52 homolog (214 aa).

Disordered regions lie at residues 1 to 66 and 81 to 214; these read MSDE…SVSK and DSRA…QCLD. The span at 32–44 shows a compositional bias: low complexity; the sequence is PEATASSAPAEPQ. Composition is skewed to basic and acidic residues over residues 49–61 and 81–97; these read RAAE…DELF and DSRA…EFKV. The span at 152–165 shows a compositional bias: acidic residues; it reads EEEEEEQQPDSDDD. At Ser162 the chain carries Phosphoserine. Basic and acidic residues-rich tracts occupy residues 179–192 and 200–214; these read VETF…KRDI and NFVE…QCLD.

This sequence belongs to the UPF0690 family.

The protein is UPF0690 protein C1orf52 homolog of Danio rerio (Zebrafish).